Here is a 940-residue protein sequence, read N- to C-terminus: UvrABC system protein A (940 aa).

31-38 (GLSGSGKS) provides a ligand contact to ATP. A C4-type zinc finger spans residues 253-280 (CPICGYSMRELEPRLFSFNNPAGACPTC). ABC transporter domains are found at residues 310–587 (WDRR…PESL) and 607–937 (ANPE…RFLK). Residue 640–647 (GVSGSGKS) coordinates ATP. A C4-type zinc finger spans residues 740–766 (CEACQGDGVIKVEMHFLPDIYVPCDQC).

It belongs to the ABC transporter superfamily. UvrA family. Forms a heterotetramer with UvrB during the search for lesions.

It localises to the cytoplasm. Its function is as follows. The UvrABC repair system catalyzes the recognition and processing of DNA lesions. UvrA is an ATPase and a DNA-binding protein. A damage recognition complex composed of 2 UvrA and 2 UvrB subunits scans DNA for abnormalities. When the presence of a lesion has been verified by UvrB, the UvrA molecules dissociate. The chain is UvrABC system protein A from Escherichia coli O6:H1 (strain CFT073 / ATCC 700928 / UPEC).